We begin with the raw amino-acid sequence, 205 residues long: dITP/XTP pyrophosphatase (205 aa).

10-15 (TKNEGK) provides a ligand contact to substrate. 2 residues coordinate Mg(2+): E44 and D73. D73 (proton acceptor) is an active-site residue. Residues S74, 156-159 (FGYD), K179, and 184-185 (HR) contribute to the substrate site.

Belongs to the HAM1 NTPase family. In terms of assembly, homodimer. The cofactor is Mg(2+).

It carries out the reaction XTP + H2O = XMP + diphosphate + H(+). The catalysed reaction is dITP + H2O = dIMP + diphosphate + H(+). It catalyses the reaction ITP + H2O = IMP + diphosphate + H(+). Pyrophosphatase that catalyzes the hydrolysis of nucleoside triphosphates to their monophosphate derivatives, with a high preference for the non-canonical purine nucleotides XTP (xanthosine triphosphate), dITP (deoxyinosine triphosphate) and ITP. Seems to function as a house-cleaning enzyme that removes non-canonical purine nucleotides from the nucleotide pool, thus preventing their incorporation into DNA/RNA and avoiding chromosomal lesions. The protein is dITP/XTP pyrophosphatase of Dictyoglomus thermophilum (strain ATCC 35947 / DSM 3960 / H-6-12).